A 348-amino-acid chain; its full sequence is D-erythrose-4-phosphate dehydrogenase (348 aa).

Residues 12–13 (RI) and Arg81 each bind NAD(+). Residues 154–156 (SCT), Arg200, 213–214 (TK), and Arg236 contribute to the substrate site. The Nucleophile role is filled by Cys155. Asn318 lines the NAD(+) pocket.

The protein belongs to the glyceraldehyde-3-phosphate dehydrogenase family. Epd subfamily. As to quaternary structure, homotetramer.

The protein localises to the cytoplasm. It catalyses the reaction D-erythrose 4-phosphate + NAD(+) + H2O = 4-phospho-D-erythronate + NADH + 2 H(+). The protein operates within cofactor biosynthesis; pyridoxine 5'-phosphate biosynthesis; pyridoxine 5'-phosphate from D-erythrose 4-phosphate: step 1/5. Catalyzes the NAD-dependent conversion of D-erythrose 4-phosphate to 4-phosphoerythronate. The protein is D-erythrose-4-phosphate dehydrogenase of Salmonella gallinarum (strain 287/91 / NCTC 13346).